Consider the following 385-residue polypeptide: UPF0284 protein A9601_04941 (385 aa).

This sequence belongs to the UPF0284 family.

The chain is UPF0284 protein A9601_04941 from Prochlorococcus marinus (strain AS9601).